The primary structure comprises 942 residues: DNA mismatch repair protein MutS (942 aa).

613-620 (GPNMAGKS) provides a ligand contact to ATP.

Belongs to the DNA mismatch repair MutS family.

This protein is involved in the repair of mismatches in DNA. It is possible that it carries out the mismatch recognition step. This protein has a weak ATPase activity. This chain is DNA mismatch repair protein MutS, found in Clostridium botulinum (strain Eklund 17B / Type B).